A 471-amino-acid chain; its full sequence is Argininosuccinate lyase (471 aa).

The protein belongs to the lyase 1 family. Argininosuccinate lyase subfamily.

It is found in the cytoplasm. It carries out the reaction 2-(N(omega)-L-arginino)succinate = fumarate + L-arginine. Its pathway is amino-acid biosynthesis; L-arginine biosynthesis; L-arginine from L-ornithine and carbamoyl phosphate: step 3/3. The chain is Argininosuccinate lyase from Ehrlichia canis (strain Jake).